Consider the following 287-residue polypeptide: uncharacterized protein (287 aa).

A disordered region spans residues 1–23 (MTVSDSPAQRQTPPQTPGGTAPR). Over residues 7-23 (PAQRQTPPQTPGGTAPR) the composition is skewed to low complexity. Asp31, Asp33, and Asp204 together coordinate Mg(2+).

The protein belongs to the HAD-like hydrolase superfamily. SerB family.

This is an uncharacterized protein from Mycobacterium tuberculosis (strain CDC 1551 / Oshkosh).